The following is a 549-amino-acid chain: CTP synthase (549 aa).

The amidoligase domain stretch occupies residues 1 to 267 (MTKFVFVTGG…AAQVLSLLNL (267 aa)). A CTP-binding site is contributed by S13. S13 serves as a coordination point for UTP. ATP-binding positions include 14–19 (SIGKGI) and D71. The Mg(2+) site is built by D71 and E141. CTP-binding positions include 148-150 (DIE), 188-193 (KTKPTQ), and K224. Residues 188 to 193 (KTKPTQ) and K224 contribute to the UTP site. In terms of domain architecture, Glutamine amidotransferase type-1 spans 292-534 (EIAIVGKYVR…VQAARTHSSD (243 aa)). G354 contributes to the L-glutamine binding site. The active-site Nucleophile; for glutamine hydrolysis is the C381. L-glutamine-binding positions include 382 to 385 (LGMQ), E405, and R462. Active-site residues include H507 and E509.

It belongs to the CTP synthase family. Homotetramer.

The catalysed reaction is UTP + L-glutamine + ATP + H2O = CTP + L-glutamate + ADP + phosphate + 2 H(+). It catalyses the reaction L-glutamine + H2O = L-glutamate + NH4(+). It carries out the reaction UTP + NH4(+) + ATP = CTP + ADP + phosphate + 2 H(+). It participates in pyrimidine metabolism; CTP biosynthesis via de novo pathway; CTP from UDP: step 2/2. Its activity is regulated as follows. Allosterically activated by GTP, when glutamine is the substrate; GTP has no effect on the reaction when ammonia is the substrate. The allosteric effector GTP functions by stabilizing the protein conformation that binds the tetrahedral intermediate(s) formed during glutamine hydrolysis. Inhibited by the product CTP, via allosteric rather than competitive inhibition. In terms of biological role, catalyzes the ATP-dependent amination of UTP to CTP with either L-glutamine or ammonia as the source of nitrogen. Regulates intracellular CTP levels through interactions with the four ribonucleotide triphosphates. The protein is CTP synthase of Cyanothece sp. (strain PCC 7425 / ATCC 29141).